The primary structure comprises 270 residues: Putative phosphoenolpyruvate synthase regulatory protein (270 aa).

Position 149-156 (G149–T156) interacts with ADP.

It belongs to the pyruvate, phosphate/water dikinase regulatory protein family. PSRP subfamily.

It carries out the reaction [pyruvate, water dikinase] + ADP = [pyruvate, water dikinase]-phosphate + AMP + H(+). The catalysed reaction is [pyruvate, water dikinase]-phosphate + phosphate + H(+) = [pyruvate, water dikinase] + diphosphate. Bifunctional serine/threonine kinase and phosphorylase involved in the regulation of the phosphoenolpyruvate synthase (PEPS) by catalyzing its phosphorylation/dephosphorylation. This chain is Putative phosphoenolpyruvate synthase regulatory protein, found in Pseudoalteromonas atlantica (strain T6c / ATCC BAA-1087).